We begin with the raw amino-acid sequence, 445 residues long: DNA polymerase IV (445 aa).

Residues L49–G229 form the UmuC domain. 2 residues coordinate Mg(2+): D53 and D146. The active site involves E147.

Belongs to the DNA polymerase type-Y family. In terms of assembly, monomer. The cofactor is Mg(2+).

The protein localises to the cytoplasm. The enzyme catalyses DNA(n) + a 2'-deoxyribonucleoside 5'-triphosphate = DNA(n+1) + diphosphate. Functionally, poorly processive, error-prone DNA polymerase involved in untargeted mutagenesis. Copies undamaged DNA at stalled replication forks, which arise in vivo from mismatched or misaligned primer ends. These misaligned primers can be extended by PolIV. Exhibits no 3'-5' exonuclease (proofreading) activity. May be involved in translesional synthesis, in conjunction with the beta clamp from PolIII. The polypeptide is DNA polymerase IV (Brucella melitensis biotype 1 (strain ATCC 23456 / CCUG 17765 / NCTC 10094 / 16M)).